The chain runs to 324 residues: Cysteine-rich repeat secretory protein 9 (324 aa).

Positions 1–27 (MARIIITLTIPLFYFFFFSLLSHQTMS) are cleaved as a signal peptide. 2 consecutive Gnk2-homologous domains span residues 29–132 (PDHI…NVSF) and 138–248 (IVPS…TSVL). A disordered region spans residues 251-286 (PPPSPSAPPPRSPPPKSSPPSSLPQTPSPPLVFTPP).

It belongs to the cysteine-rich repeat secretory protein family.

Its subcellular location is the secreted. This chain is Cysteine-rich repeat secretory protein 9 (CRRSP9), found in Arabidopsis thaliana (Mouse-ear cress).